A 448-amino-acid polypeptide reads, in one-letter code: Glucose-6-phosphate isomerase (448 aa).

Glutamate 290 serves as the catalytic Proton donor. Catalysis depends on residues histidine 311 and lysine 425.

It belongs to the GPI family.

The protein localises to the cytoplasm. The enzyme catalyses alpha-D-glucose 6-phosphate = beta-D-fructose 6-phosphate. It participates in carbohydrate biosynthesis; gluconeogenesis. The protein operates within carbohydrate degradation; glycolysis; D-glyceraldehyde 3-phosphate and glycerone phosphate from D-glucose: step 2/4. Functionally, catalyzes the reversible isomerization of glucose-6-phosphate to fructose-6-phosphate. In Latilactobacillus sakei subsp. sakei (strain 23K) (Lactobacillus sakei subsp. sakei), this protein is Glucose-6-phosphate isomerase.